Consider the following 57-residue polypeptide: Aspartyl-phosphate phosphatase YnzD (57 aa).

Belongs to the spo0E family.

Its function is as follows. Aspartyl-phosphate phosphatase which specifically dephosphorylates the sporulation transcription factor Spo0A-P and negatively regulates the sporulation initiation pathway in order to control the proper timing of sporulation. The polypeptide is Aspartyl-phosphate phosphatase YnzD (ynzD) (Bacillus subtilis (strain 168)).